A 310-amino-acid polypeptide reads, in one-letter code: tRNA dimethylallyltransferase (310 aa).

11 to 18 (GPTAVGKT) provides a ligand contact to ATP. 13-18 (TAVGKT) serves as a coordination point for substrate. Positions 36-39 (DSMQ) are interaction with substrate tRNA.

It belongs to the IPP transferase family. In terms of assembly, monomer. Mg(2+) serves as cofactor.

It carries out the reaction adenosine(37) in tRNA + dimethylallyl diphosphate = N(6)-dimethylallyladenosine(37) in tRNA + diphosphate. In terms of biological role, catalyzes the transfer of a dimethylallyl group onto the adenine at position 37 in tRNAs that read codons beginning with uridine, leading to the formation of N6-(dimethylallyl)adenosine (i(6)A). This Shouchella clausii (strain KSM-K16) (Alkalihalobacillus clausii) protein is tRNA dimethylallyltransferase.